A 462-amino-acid chain; its full sequence is Chromosomal replication initiator protein DnaA (462 aa).

The domain I, interacts with DnaA modulators stretch occupies residues 1 to 83 (MSLSLWQQCL…LRFEVGSKPA (83 aa)). A domain II region spans residues 83–125 (AARAHNNPVTASVSAPVAPVTRSAPMRPSWDNSPAQPELSYRS). Residues 104–125 (RSAPMRPSWDNSPAQPELSYRS) are disordered. Polar residues predominate over residues 112 to 125 (WDNSPAQPELSYRS). Residues 126–342 (NVNPKHTFDN…GALNRVIANA (217 aa)) are domain III, AAA+ region. ATP-binding residues include Gly170, Gly172, Lys173, and Thr174. The tract at residues 343 to 462 (NFTGRAITID…FSNLIRTLSS (120 aa)) is domain IV, binds dsDNA.

This sequence belongs to the DnaA family. As to quaternary structure, oligomerizes as a right-handed, spiral filament on DNA at oriC.

The protein localises to the cytoplasm. Plays an essential role in the initiation and regulation of chromosomal replication. ATP-DnaA binds to the origin of replication (oriC) to initiate formation of the DNA replication initiation complex once per cell cycle. Binds the DnaA box (a 9 base pair repeat at the origin) and separates the double-stranded (ds)DNA. Forms a right-handed helical filament on oriC DNA; dsDNA binds to the exterior of the filament while single-stranded (ss)DNA is stabiized in the filament's interior. The ATP-DnaA-oriC complex binds and stabilizes one strand of the AT-rich DNA unwinding element (DUE), permitting loading of DNA polymerase. After initiation quickly degrades to an ADP-DnaA complex that is not apt for DNA replication. Binds acidic phospholipids. In Yersinia pseudotuberculosis serotype O:1b (strain IP 31758), this protein is Chromosomal replication initiator protein DnaA.